We begin with the raw amino-acid sequence, 328 residues long: Transcriptional regulator protein Pur-beta-B (328 aa).

Disordered regions lie at residues 1–35 (MADG…ELAS), 100–124 (SPEQ…RALK), and 289–328 (QERQ…VDDD). Position 2 is an N-acetylalanine (A2). Positions 9-18 (ERGGSSGGPS) are enriched in gly residues. The segment covering 24 to 35 (MSREQETQELAS) has biased composition (basic and acidic residues). The segment at 27 to 260 (EQETQELASK…LRVSEVKPSY (234 aa)) is DNA-binding. The segment covering 289-303 (QERQRDKMYDRRGPG) has biased composition (basic and acidic residues). Residues 304–317 (ERGGSLGPGAGGGG) are compositionally biased toward gly residues. Positions 318-328 (DDSETEDVDDD) are enriched in acidic residues.

This sequence belongs to the PUR DNA-binding protein family.

Its subcellular location is the nucleus. In terms of biological role, transcriptional regulator which can act as an activator or a repressor. This is Transcriptional regulator protein Pur-beta-B (purb-b) from Xenopus laevis (African clawed frog).